We begin with the raw amino-acid sequence, 721 residues long: Solute carrier family 12 member 8 (721 aa).

A run of 11 helical transmembrane segments spans residues 53–73 (FGTW…VVLF), 84–104 (GVLL…VTVL), 115–135 (IGSG…VGGT), 136–156 (IGVL…TGFA), 174–194 (ISLA…KWII), 196–216 (LQLL…IGSF), 247–267 (FFTV…GFNM), 283–303 (LAAI…LGAI), 321–341 (LVGG…CMGG), 374–394 (PVAA…IGQV), and 397–417 (LAPI…YSYF). 2 disordered regions span residues 473–505 (PNHT…KQTL) and 533–580 (NESQ…STVA). The segment covering 553 to 565 (TESDEPDSEEDVD) has biased composition (acidic residues). Transmembrane regions (helical) follow at residues 606 to 626 (FLGA…YALV) and 628 to 648 (LGVA…LNPG).

Belongs to the SLC12A transporter family.

The protein localises to the membrane. Functionally, cation/chloride cotransporter. This is Solute carrier family 12 member 8 (slc12a8) from Xenopus laevis (African clawed frog).